The following is a 295-amino-acid chain: sn-glycerol-3-phosphate transport system permease protein UgpA (295 aa).

At 1–11 (MSSSRPVFRSR) the chain is on the cytoplasmic side. A helical membrane pass occupies residues 12-32 (WLPYLLVAPQLIITVIFFIWP). The Periplasmic segment spans residues 33 to 80 (AGEALWYSLQSVDPFGFSSQFVGLDNFVALFHDSYYIDSFWTTIKFST). The region spanning 76-284 (IKFSTFVTVS…FLVIVLTVVQ (209 aa)) is the ABC transmembrane type-1 domain. Residues 81-101 (FVTVSGLLVSLFFAALVEYIV) form a helical membrane-spanning segment. Residues 102-109 (RGSRFYQT) are Cytoplasmic-facing. Residues 110-130 (LMLLPYAVAPAVAAVLWIFLF) traverse the membrane as a helical segment. The Periplasmic segment spans residues 131 to 156 (NPGRGLITHFLAEFGYDWNHAQNSGQ). A helical transmembrane segment spans residues 157 to 177 (AMFLVVFASVWKQISYNFLFF). The Cytoplasmic portion of the chain corresponds to 178 to 207 (YAALQSIPRSLIEAAAIDGVGPIRRFFKIA). A helical membrane pass occupies residues 208 to 228 (LPLIAPVSFFLLVVNLVYAFF). Topologically, residues 229 to 262 (DTFPVIDAATSGGPVQAITTLIYKIYREGFTGLD) are periplasmic. The chain crosses the membrane as a helical span at residues 263 to 283 (LASSAAQSVVLMFLVIVLTVV). Residues 284-295 (QFRYVESKVRYQ) are Cytoplasmic-facing.

It belongs to the binding-protein-dependent transport system permease family. UgpAE subfamily. In terms of assembly, the complex is composed of two ATP-binding proteins (UgpC), two transmembrane proteins (UgpA and UgpE) and a solute-binding protein (UgpB).

It is found in the cell inner membrane. Part of the ABC transporter complex UgpBAEC involved in sn-glycerol-3-phosphate (G3P) import. Probably responsible for the translocation of the substrate across the membrane. The chain is sn-glycerol-3-phosphate transport system permease protein UgpA (ugpA) from Shigella dysenteriae serotype 1 (strain Sd197).